Reading from the N-terminus, the 320-residue chain is Ferrochelatase (320 aa).

Residues histidine 194 and glutamate 275 each coordinate Fe cation.

It belongs to the ferrochelatase family.

Its subcellular location is the cytoplasm. The catalysed reaction is heme b + 2 H(+) = protoporphyrin IX + Fe(2+). The protein operates within porphyrin-containing compound metabolism; protoheme biosynthesis; protoheme from protoporphyrin-IX: step 1/1. Its function is as follows. Catalyzes the ferrous insertion into protoporphyrin IX. The sequence is that of Ferrochelatase from Yersinia pestis bv. Antiqua (strain Antiqua).